The chain runs to 447 residues: Chordin-like protein 1 (447 aa).

The signal sequence occupies residues 1–22 (MDGMKYIISLFFIFVFLEGSKT). VWFC domains are found at residues 30–95 (TYCV…PRCP) and 108–174 (KSCE…RVCR). N113 carries N-linked (GlcNAc...) asparagine glycosylation. Positions 174–176 (RGD) match the Cell attachment site motif. The tract at residues 200–224 (SYLRSPYDPPPNRQAGGLPRFPGSR) is disordered. The VWFC 3 domain maps to 253 to 318 (QVCVSNGKTY…IDGKCCKVCP (66 aa)). N286 carries an N-linked (GlcNAc...) asparagine glycan.

In terms of processing, may be glycosylated. As to expression, expressed in heart, brain, lung, liver, kidney and testis.

It localises to the secreted. In terms of biological role, seems to antagonize the function of BMP4 by binding to it and preventing its interaction with receptors. Alters the fate commitment of neural stem cells from gliogenesis to neurogenesis. Contributes to neuronal differentiation of neural stem cells in the brain by preventing the adoption of a glial fate. May play a crucial role in dorsoventral axis formation. Antagonizes the function of BMP7 and may thus play an important role in the embryonic bone formation. Shows no inhibitory effect on the inducing activity of BMP2. Plays a role during anterior segment eye development. The chain is Chordin-like protein 1 (Chrdl1) from Mus musculus (Mouse).